The sequence spans 168 residues: Cytochrome c-type biogenesis protein CcmE (168 aa).

Residues 1-23 lie on the Cytoplasmic side of the membrane; it reads MTTAPSGLPGTPLPPARRRERPR. Residues 24 to 44 form a helical; Signal-anchor for type II membrane protein membrane-spanning segment; sequence WPLLVAGAAVLGLIGYMVLGN. Residues 45–168 are Extracellular-facing; that stretch reads ANSNLVYYVL…KILNDQSTKP (124 aa). Heme-binding residues include H137 and Y141. The interval 145-168 is disordered; sequence DSKGEGQYSQDDLKKILNDQSTKP.

The protein belongs to the CcmE/CycJ family.

Its subcellular location is the cell membrane. Functionally, heme chaperone required for the biogenesis of c-type cytochromes. Transiently binds heme delivered by CcmC and transfers the heme to apo-cytochromes in a process facilitated by CcmF and CcmH. This chain is Cytochrome c-type biogenesis protein CcmE, found in Deinococcus radiodurans (strain ATCC 13939 / DSM 20539 / JCM 16871 / CCUG 27074 / LMG 4051 / NBRC 15346 / NCIMB 9279 / VKM B-1422 / R1).